The following is a 332-amino-acid chain: DGAT1/2-independent enzyme synthesizing storage lipids (332 aa).

The Lumenal portion of the chain corresponds to methionine 1–glutamate 10. Asparagine 5 is a glycosylation site (N-linked (GlcNAc...) asparagine). A helical transmembrane segment spans residues glycine 11–valine 31. At glutamate 32–serine 45 the chain is on the cytoplasmic side. Residues tryptophan 46–phenylalanine 66 traverse the membrane as a helical segment. Residues asparagine 67 to aspartate 332 are Lumenal-facing. Histidine 132 is an active-site residue. Asparagine 289 is a glycosylation site (N-linked (GlcNAc...) asparagine).

It belongs to the diacylglycerol acyltransferase family. Highly divergent.

It localises to the endoplasmic reticulum membrane. The catalysed reaction is a 1,2-diacylglycerol + a 1,2-diacyl-sn-glycero-3-phosphocholine = a triacylglycerol + a 1-acyl-sn-glycero-3-phosphocholine. It carries out the reaction a 1-O-alkyl-2-acyl-sn-glycero-3-phosphocholine + a 1,2-diacylglycerol = a 1-O-alkyl-sn-glycero-3-phosphocholine + a triacylglycerol. It catalyses the reaction a 2-acylglycerol + an acyl-CoA = a 1,2-diacylglycerol + CoA. The enzyme catalyses an acyl-CoA + a 1,2-diacyl-sn-glycerol = a triacyl-sn-glycerol + CoA. The catalysed reaction is 2-(9Z-octadecenoyl)-glycerol + (9Z)-octadecenoyl-CoA = 1,2-di-(9Z-octadecenoyl)-glycerol + CoA. It carries out the reaction 1,2-di-(9Z-octadecenoyl)-sn-glycerol + (9Z)-octadecenoyl-CoA = 1,2,3-tri-(9Z-octadecenoyl)-glycerol + CoA. In terms of biological role, catalytic subunit of the alternative triglyceride biosynthesis pathway, which mediates formation of triacylglycerol from diacylglycerol and membrane phospholipids. Synthesizes triacylglycerol at the expense of membrane phospholipids, such as phosphatidylcholine (PC) and its ether-linked form (ePC), thereby altering the composition of membranes. The alternative triglyceride biosynthesis pathway is probably required to provide the energy required for rapid growth when fuel sources are limiting. It maintains mitochondrial function during periods of extracellular lipid starvation. Can also use acyl-CoA as donor: acts as a acyl-CoA:monoacylglycerol acyltransferase (MGAT), but also shows acyl-CoA:diacylglycerol acyltransferase (DGAT) activity. The protein is DGAT1/2-independent enzyme synthesizing storage lipids (TMEM68) of Gallus gallus (Chicken).